The following is a 173-amino-acid chain: MTYFVLFLGLCFVLGGLAVASNPSPYYGVVGLVLASVAGCGWLLSLGVSFVSLVLFMVYLGGMLVVFVYSVSLAADPFPEAWGDWGVVGYGVGFVVVLVVGLVVGGFVGSLDFGVVTVDSVGMFSVRLDFSGVAMFYSCGVGMFLVAGWGLLLTLFVVLELVRGLSRGAIRAV.

A run of 5 helical transmembrane segments spans residues M1 to S21, Y27 to G47, V48 to V68, V87 to F107, and C139 to L159.

This sequence belongs to the complex I subunit 6 family.

It is found in the mitochondrion membrane. The enzyme catalyses a ubiquinone + NADH + 5 H(+)(in) = a ubiquinol + NAD(+) + 4 H(+)(out). Core subunit of the mitochondrial membrane respiratory chain NADH dehydrogenase (Complex I) that is believed to belong to the minimal assembly required for catalysis. Complex I functions in the transfer of electrons from NADH to the respiratory chain. The immediate electron acceptor for the enzyme is believed to be ubiquinone. The protein is NADH-ubiquinone oxidoreductase chain 6 (MT-ND6) of Aethia pygmaea (Whiskered auklet).